Consider the following 274-residue polypeptide: tRNA-cytidine(32) 2-sulfurtransferase (274 aa).

The PP-loop motif signature appears at 40 to 45 (SGGKDS). Cys115, Cys118, and Cys206 together coordinate [4Fe-4S] cluster.

Belongs to the TtcA family. As to quaternary structure, homodimer. Mg(2+) serves as cofactor. It depends on [4Fe-4S] cluster as a cofactor.

It localises to the cytoplasm. The catalysed reaction is cytidine(32) in tRNA + S-sulfanyl-L-cysteinyl-[cysteine desulfurase] + AH2 + ATP = 2-thiocytidine(32) in tRNA + L-cysteinyl-[cysteine desulfurase] + A + AMP + diphosphate + H(+). It participates in tRNA modification. Catalyzes the ATP-dependent 2-thiolation of cytidine in position 32 of tRNA, to form 2-thiocytidine (s(2)C32). The sulfur atoms are provided by the cysteine/cysteine desulfurase (IscS) system. The polypeptide is tRNA-cytidine(32) 2-sulfurtransferase (Pseudomonas fluorescens (strain SBW25)).